The sequence spans 229 residues: 1-(5-phosphoribosyl)-5-[(5-phosphoribosylamino)methylideneamino] imidazole-4-carboxamide isomerase (229 aa).

The active-site Proton acceptor is the Asp-8. Asp-125 acts as the Proton donor in catalysis.

The protein belongs to the HisA/HisF family.

The protein localises to the cytoplasm. It catalyses the reaction 1-(5-phospho-beta-D-ribosyl)-5-[(5-phospho-beta-D-ribosylamino)methylideneamino]imidazole-4-carboxamide = 5-[(5-phospho-1-deoxy-D-ribulos-1-ylimino)methylamino]-1-(5-phospho-beta-D-ribosyl)imidazole-4-carboxamide. It participates in amino-acid biosynthesis; L-histidine biosynthesis; L-histidine from 5-phospho-alpha-D-ribose 1-diphosphate: step 4/9. This is 1-(5-phosphoribosyl)-5-[(5-phosphoribosylamino)methylideneamino] imidazole-4-carboxamide isomerase from Thermococcus onnurineus (strain NA1).